Here is a 414-residue protein sequence, read N- to C-terminus: TBC domain-containing protein C1778.09 (414 aa).

The region spanning 158 to 343 is the Rab-GAP TBC domain; that stretch reads GIPDCWRSIA…RIWDLLFLLG (186 aa).

The protein localises to the cytoplasm. Its subcellular location is the nucleus. The chain is TBC domain-containing protein C1778.09 from Schizosaccharomyces pombe (strain 972 / ATCC 24843) (Fission yeast).